Reading from the N-terminus, the 288-residue chain is Homoserine kinase (288 aa).

78–88 (PLARGLGSSSS) serves as a coordination point for ATP.

It belongs to the GHMP kinase family. Homoserine kinase subfamily.

The protein resides in the cytoplasm. The catalysed reaction is L-homoserine + ATP = O-phospho-L-homoserine + ADP + H(+). It participates in amino-acid biosynthesis; L-threonine biosynthesis; L-threonine from L-aspartate: step 4/5. Functionally, catalyzes the ATP-dependent phosphorylation of L-homoserine to L-homoserine phosphate. The protein is Homoserine kinase of Streptococcus agalactiae serotype III (strain NEM316).